A 1069-amino-acid chain; its full sequence is Acyl-CoA dehydrogenase family member 10 (1069 aa).

Lys413 is modified (N6-succinyllysine). An N6-acetyllysine; alternate modification is found at Lys427. The residue at position 427 (Lys427) is an N6-succinyllysine; alternate. Residues 792–802 (FAMTEPQVASS), Ser828, Arg943, Gln1013, and Glu1044 each bind FAD. Residue Lys1052 is modified to N6-acetyllysine; alternate. Lys1052 is subject to N6-succinyllysine; alternate.

The protein belongs to the acyl-CoA dehydrogenase family. The cofactor is FAD.

The enzyme catalyses a 2,3-saturated acyl-CoA + A = a 2,3-dehydroacyl-CoA + AH2. Acyl-CoA dehydrogenase only active with R- and S-2-methyl-C15-CoA. The protein is Acyl-CoA dehydrogenase family member 10 (Acad10) of Mus musculus (Mouse).